Reading from the N-terminus, the 570-residue chain is MIPPEIRRSVLLQKAIKLALAGTLLTFASFSATAADPSSDTETPQPPDILLGPLFNDVQNAKLFPDQKTFADAIPNSDPLMILADYRMQRNQSGFDLRHFVDVNFTLPKAGEKYVPPAGQSLREHIDGLWPVLTRSTKNVEKWDSLLPLPESYVVPGGRFREIYYWDSYFTMLGLAESGHWDKVADMVANFGYEIDAWGHIPNGNRTYYLSRSQPPFFAFMVELLAQHEGDDALKEYLPQLQKEYAYWMEGVETLQPGQQNQRVVKLEDGSVLNRYWDDRDTPRPESWVEDIATVKSNPNRPATEIYRDLRSAAASGWDFSSRWMDNPQQLSTIRTTTIVPVDLNALLYQLEKTLARASAAAGDRAKASHYDALANARQKAIEMHLWNNKEGWYADYDLKNNKIRDQLTAAALFPLYVNAAAKDRAAKVAAAAQAHLLQPGGLATTSVKSGQQWDAPNGWAPLQWVAAEGLQNYGQDDVAMEVTWRFLTNVQHTYDREKKLVEKYDVSSTGTGGGGGEYPLQDGFGWTNGVTLKMLDLICPQEKPCDSVPSTRPASLSATPTKTPSAATQ.

The N-terminal stretch at 1-34 (MIPPEIRRSVLLQKAIKLALAGTLLTFASFSATA) is a signal peptide. Substrate contacts are provided by residues R159, 166–167 (WD), N203, 212–214 (RSQ), 284–286 (RPE), and G317. Active-site proton donor/acceptor residues include D319 and E503. Residue E518 coordinates substrate. The interval 544–570 (KPCDSVPSTRPASLSATPTKTPSAATQ) is disordered. The span at 554-570 (PASLSATPTKTPSAATQ) shows a compositional bias: low complexity.

The protein belongs to the glycosyl hydrolase 37 family. In terms of assembly, monomer.

The protein resides in the periplasm. It carries out the reaction alpha,alpha-trehalose + H2O = alpha-D-glucose + beta-D-glucose. In terms of biological role, provides the cells with the ability to utilize trehalose at high osmolarity by splitting it into glucose molecules that can subsequently be taken up by the phosphotransferase-mediated uptake system. The chain is Periplasmic trehalase from Salmonella dublin (strain CT_02021853).